The sequence spans 82 residues: Toxin TdNa6 (82 aa).

Residues 1 to 20 (MKGMIMLISCLMLIEVVVGG) form the signal peptide. The LCN-type CS-alpha/beta domain occupies 21–82 (KEGYLLDRSN…KMWHLKTNKC (62 aa)). Disulfide bonds link Cys-32–Cys-82, Cys-36–Cys-58, Cys-44–Cys-63, and Cys-48–Cys-65.

It belongs to the long (4 C-C) scorpion toxin superfamily. Sodium channel inhibitor family. Beta subfamily. As to expression, expressed by the venom gland.

It localises to the secreted. Beta toxins bind voltage-independently at site-4 of sodium channels (Nav) and shift the voltage of activation toward more negative potentials thereby affecting sodium channel activation and promoting spontaneous and repetitive firing. Is toxic to arthropods. This chain is Toxin TdNa6, found in Tityus discrepans (Venezuelan scorpion).